The following is a 330-amino-acid chain: WRKY transcription factor WRKY51 (330 aa).

A disordered region spans residues 39 to 61; that stretch reads QTGTSERSPAPAPAQEQQQQQQV. The span at 51–60 shows a compositional bias: low complexity; the sequence is PAQEQQQQQQ. The Nuclear localization signal signature appears at 74–81; sequence FKKVISML. Disordered regions lie at residues 91–117 and 302–330; these read RGPVVAQSSGPAASEPAPVRSSPSAVS and YEGEHRHTPSAAGQDHPPAPPPPLALPLA. A compositionally biased stretch (low complexity) spans 101-117; the sequence is PAASEPAPVRSSPSAVS. The segment at residues 245 to 311 is a DNA-binding region (WRKY); it reads KVADIPADDF…YEGEHRHTPS (67 aa). Over residues 318–330 the composition is skewed to pro residues; it reads PPAPPPPLALPLA.

It belongs to the WRKY group II-a family. Highly expressed in aleurone cells. In seeds, predominantly present in the plumule, radicle and scutellum of the embryo.

The protein localises to the nucleus. Transcription factor. Interacts, when in complex with WRKY71, specifically with the W box (5'-(T)TGAC[CT]-3'), a frequently occurring elicitor-responsive cis-acting element. Represses specifically gibberellic acid (GA)-induced promoters in aleurone cells, probably by interfering with GAM1. In Oryza sativa subsp. indica (Rice), this protein is WRKY transcription factor WRKY51.